Reading from the N-terminus, the 384-residue chain is Cysteine protease ATG4B (384 aa).

The active-site Nucleophile is the Cys74. Active-site residues include Asp269 and His271. The LIR motif lies at 379-382 (FEIL).

Belongs to the peptidase C54 family.

The protein resides in the cytoplasm. The protein localises to the cytosol. It localises to the cytoplasmic vesicle. Its subcellular location is the autophagosome. It is found in the endoplasmic reticulum. The protein resides in the mitochondrion. It carries out the reaction [protein]-C-terminal L-amino acid-glycyl-phosphatidylethanolamide + H2O = [protein]-C-terminal L-amino acid-glycine + a 1,2-diacyl-sn-glycero-3-phosphoethanolamine. It catalyses the reaction [protein]-C-terminal L-amino acid-glycyl-phosphatidylserine + H2O = [protein]-C-terminal L-amino acid-glycine + a 1,2-diacyl-sn-glycero-3-phospho-L-serine. Its function is as follows. Cysteine protease that plays a key role in autophagy by mediating both proteolytic activation and delipidation of ATG8 family proteins. Required for canonical autophagy (macroautophagy), non-canonical autophagy as well as for mitophagy. The protease activity is required for proteolytic activation of ATG8 family proteins: cleaves the C-terminal amino acid of ATG8 proteins to reveal a C-terminal glycine. Exposure of the glycine at the C-terminus is essential for ATG8 proteins conjugation to phosphatidylethanolamine (PE) and insertion to membranes, which is necessary for autophagy. Protease activity is also required to counteract formation of high-molecular weight conjugates of ATG8 proteins (ATG8ylation): acts as a deubiquitinating-like enzyme that removes ATG8 conjugated to other proteins, such as ATG3. In addition to the protease activity, also mediates delipidation of ATG8 family proteins. Catalyzes delipidation of PE-conjugated forms of ATG8 proteins during macroautophagy. Also involved in non-canonical autophagy, a parallel pathway involving conjugation of ATG8 proteins to single membranes at endolysosomal compartments, by catalyzing delipidation of ATG8 proteins conjugated to phosphatidylserine (PS). In Xenopus laevis (African clawed frog), this protein is Cysteine protease ATG4B.